A 156-amino-acid polypeptide reads, in one-letter code: MTIFEKKPDFTLFLQTLSWEIDDQVGIEVRNELLREVGRGMGTRIMPPPCQTVDKLQIELNALLALIGWGTVTLELLSEDQSLRIVHENLPQVGSAGEPSGTWLAPVLEGLYGRWVTSQAGAFGDYVVTRDVDAEDLNAVPRQTIIMYMRVRSSAT.

The protein operates within glycan metabolism; bacterial cellulose biosynthesis. May have a major role in the perfection of crystallization, involved either in the pore structure itself or in the organization of the pores within the linear array of terminal synthesizing complexes (TCs). This Komagataeibacter xylinus (Gluconacetobacter xylinus) protein is Cellulose synthase operon protein D (acsD).